We begin with the raw amino-acid sequence, 119 residues long: Large ribosomal subunit protein uL18 (119 aa).

Belongs to the universal ribosomal protein uL18 family. In terms of assembly, part of the 50S ribosomal subunit; part of the 5S rRNA/L5/L18/L25 subcomplex. Contacts the 5S and 23S rRNAs.

This is one of the proteins that bind and probably mediate the attachment of the 5S RNA into the large ribosomal subunit, where it forms part of the central protuberance. The sequence is that of Large ribosomal subunit protein uL18 from Dinoroseobacter shibae (strain DSM 16493 / NCIMB 14021 / DFL 12).